The following is a 364-amino-acid chain: Ribosomal RNA large subunit methyltransferase F (364 aa).

The segment covering 1–17 (MPKPAIKTAAKPATSSA) has biased composition (low complexity). A disordered region spans residues 1–53 (MPKPAIKTAAKPATSSAGKRGKPITPKSVAKPQAAKPKTVSKPKVKPGEKKRL). Residues 39 to 53 (TVSKPKVKPGEKKRL) show a composition bias toward basic residues.

The protein belongs to the methyltransferase superfamily. METTL16/RlmF family.

It localises to the cytoplasm. The catalysed reaction is adenosine(1618) in 23S rRNA + S-adenosyl-L-methionine = N(6)-methyladenosine(1618) in 23S rRNA + S-adenosyl-L-homocysteine + H(+). In terms of biological role, specifically methylates the adenine in position 1618 of 23S rRNA. In Shewanella sp. (strain MR-4), this protein is Ribosomal RNA large subunit methyltransferase F.